The sequence spans 599 residues: Aspartate--tRNA(Asp/Asn) ligase (599 aa).

An L-aspartate-binding site is contributed by glutamate 169. The interval 193-196 (QLFK) is aspartate. L-aspartate is bound at residue arginine 215. ATP is bound by residues 215 to 217 (RDE) and glutamine 224. Histidine 447 lines the L-aspartate pocket. Glutamate 481 contacts ATP. Arginine 488 is an L-aspartate binding site. Position 533–536 (533–536 (GWDR)) interacts with ATP.

This sequence belongs to the class-II aminoacyl-tRNA synthetase family. Type 1 subfamily. As to quaternary structure, homodimer.

The protein resides in the cytoplasm. It catalyses the reaction tRNA(Asx) + L-aspartate + ATP = L-aspartyl-tRNA(Asx) + AMP + diphosphate. Functionally, aspartyl-tRNA synthetase with relaxed tRNA specificity since it is able to aspartylate not only its cognate tRNA(Asp) but also tRNA(Asn). Reaction proceeds in two steps: L-aspartate is first activated by ATP to form Asp-AMP and then transferred to the acceptor end of tRNA(Asp/Asn). This is Aspartate--tRNA(Asp/Asn) ligase from Pseudarthrobacter chlorophenolicus (strain ATCC 700700 / DSM 12829 / CIP 107037 / JCM 12360 / KCTC 9906 / NCIMB 13794 / A6) (Arthrobacter chlorophenolicus).